Reading from the N-terminus, the 226-residue chain is Acyl-homoserine-lactone synthase (226 aa).

This sequence belongs to the autoinducer synthase family.

The enzyme catalyses a fatty acyl-[ACP] + S-adenosyl-L-methionine = an N-acyl-L-homoserine lactone + S-methyl-5'-thioadenosine + holo-[ACP] + H(+). In terms of biological role, required for the synthesis of OHHL (N-(3-oxohexanoyl)-L-homoserine lactone), an autoinducer molecule. The protein is Acyl-homoserine-lactone synthase (psyI) of Pseudomonas amygdali pv. tabaci (Pseudomonas syringae pv. tabaci).